Here is a 430-residue protein sequence, read N- to C-terminus: Glutamate-1-semialdehyde 2,1-aminomutase (430 aa).

Lysine 267 carries the post-translational modification N6-(pyridoxal phosphate)lysine.

It belongs to the class-III pyridoxal-phosphate-dependent aminotransferase family. HemL subfamily. In terms of assembly, homodimer. The cofactor is pyridoxal 5'-phosphate.

It is found in the cytoplasm. The enzyme catalyses (S)-4-amino-5-oxopentanoate = 5-aminolevulinate. It participates in porphyrin-containing compound metabolism; protoporphyrin-IX biosynthesis; 5-aminolevulinate from L-glutamyl-tRNA(Glu): step 2/2. The chain is Glutamate-1-semialdehyde 2,1-aminomutase from Desulfotalea psychrophila (strain LSv54 / DSM 12343).